A 99-amino-acid polypeptide reads, in one-letter code: Mitochondrial import receptor subunit TOM9-2 (99 aa).

The Cytoplasmic segment spans residues 2–51 (AAKRIGAGKSGGGDPNILARISNSEIVSQGRRAAGDAVEVSKKLLRSTGK). The helical transmembrane segment at 52–69 (AAWIAGTTFLILVVPLII) threads the bilayer. The Mitochondrial intermembrane segment spans residues 70–99 (EMDREAQINEIELQQASLLGAPPSPMQRGL).

It belongs to the Tom22 family. Forms part of the preprotein translocase complex of the outer mitochondrial membrane (TOM complex) which consists of at least 6 different proteins (TOM5, TOM6, TOM7, TOM20, TOM22/TOM9 and TOM40). Expressed in young cotyledons, roots, flowers and leaves.

It localises to the mitochondrion outer membrane. Functionally, central component of the receptor complex responsible for the recognition and translocation of cytosolically synthesized mitochondrial preproteins. Together with TOM20 functions as the transit peptide receptor at the surface of the mitochondrion outer membrane and facilitates the movement of preproteins into the translocation pore. The protein is Mitochondrial import receptor subunit TOM9-2 (TOM9-2) of Arabidopsis thaliana (Mouse-ear cress).